The sequence spans 379 residues: DNA replication and repair protein RecF (379 aa).

An ATP-binding site is contributed by 30–37 (GKNAQGKT).

It belongs to the RecF family.

The protein localises to the cytoplasm. The RecF protein is involved in DNA metabolism; it is required for DNA replication and normal SOS inducibility. RecF binds preferentially to single-stranded, linear DNA. It also seems to bind ATP. The sequence is that of DNA replication and repair protein RecF from Ligilactobacillus salivarius (strain UCC118) (Lactobacillus salivarius).